Consider the following 75-residue polypeptide: Kappa-scoloptoxin(03)-Ssm1e (75 aa).

A signal peptide spans 1–23; sequence MKSSMAILLVMALIIFTLDKNYS.

It belongs to the scoloptoxin-03 family. In terms of processing, contains 3 disulfide bonds. Expressed by the venom gland.

The protein resides in the secreted. Its function is as follows. Inhibits voltage-gated potassium channels. The protein is Kappa-scoloptoxin(03)-Ssm1e of Scolopendra mutilans (Chinese red-headed centipede).